Consider the following 53-residue polypeptide: Putative defensin-like protein 53 (53 aa).

Disulfide bonds link Cys-12/Cys-51, Cys-16/Cys-40, Cys-26/Cys-49, and Cys-30/Cys-50.

Belongs to the DEFL family.

The chain is Putative defensin-like protein 53 from Arabidopsis thaliana (Mouse-ear cress).